The following is a 361-amino-acid chain: tRNA-specific 2-thiouridylase MnmA (361 aa).

ATP contacts are provided by residues 6–13 and I32; that span reads LVSGGVDS. An interaction with target base in tRNA region spans residues 93 to 95; the sequence is NPD. C98 (nucleophile) is an active-site residue. Residues C98 and C193 are joined by a disulfide bond. G121 lines the ATP pocket. An interaction with tRNA region spans residues 143 to 145; the sequence is KDQ. The active-site Cysteine persulfide intermediate is the C193.

The protein belongs to the MnmA/TRMU family.

It localises to the cytoplasm. The enzyme catalyses S-sulfanyl-L-cysteinyl-[protein] + uridine(34) in tRNA + AH2 + ATP = 2-thiouridine(34) in tRNA + L-cysteinyl-[protein] + A + AMP + diphosphate + H(+). Catalyzes the 2-thiolation of uridine at the wobble position (U34) of tRNA, leading to the formation of s(2)U34. This chain is tRNA-specific 2-thiouridylase MnmA, found in Porphyromonas gingivalis (strain ATCC 33277 / DSM 20709 / CIP 103683 / JCM 12257 / NCTC 11834 / 2561).